Reading from the N-terminus, the 219-residue chain is Envelope protein US9 homolog (219 aa).

The Intravirion segment spans residues 1 to 193 (MEKAEAAAVV…RHRRRRVALT (193 aa)). The Di-leucine internalization motif motif lies at 145–146 (LL). Positions 153 to 168 (DYDSESGCYYSESDNE) are acidic. A phosphoserine; by host CK2 mark is found at Ser163 and Ser165. Residues 194–214 (VAGVILVVVLCAISGIVGAFL) form a helical; Signal-anchor for type II membrane protein membrane-spanning segment. Residues 215 to 219 (ARVFP) are Virion surface-facing.

The protein belongs to the alphaherpesvirinae envelope protein US9 family. Post-translationally, phosphorylated on serines within the acidic cluster. Phosphorylation determines whether endocytosed viral US9 traffics to the trans-Golgi network or recycles to the cell membrane.

The protein localises to the virion membrane. It localises to the host Golgi apparatus membrane. It is found in the host smooth endoplasmic reticulum membrane. Its subcellular location is the host cell membrane. Functionally, essential for the anterograde spread of the infection throughout the host nervous system. Together with the gE/gI heterodimer, US9 is involved in the sorting and transport of viral structural components toward axon tips. The protein is Envelope protein US9 homolog of Equine herpesvirus 1 (strain Ab4p) (EHV-1).